A 94-amino-acid chain; its full sequence is MRTLAILAAILLVALQAQAEPLQARADEVAAAPEQIAADIPEVVVSLAWDESLAPKHPGSRKNMACYCRIPACIAGERRYGTCIYQGRLWAFCC.

The first 19 residues, 1–19 (MRTLAILAAILLVALQAQA), serve as a signal peptide directing secretion. A propeptide spanning residues 20 to 38 (EPLQARADEVAAAPEQIAA) is cleaved from the precursor. 3 cysteine pairs are disulfide-bonded: Cys-66–Cys-94, Cys-68–Cys-83, and Cys-73–Cys-93. Arg-78 is modified (ADP-ribosylarginine; by ART1). Phosphotyrosine is present on Tyr-85. Residue Arg-88 is modified to ADP-ribosylarginine; by ART1.

This sequence belongs to the alpha-defensin family. In terms of assembly, tetramer. Dimer. Interacts with RETN. As to quaternary structure, (Microbial infection) Interacts with HIV-1 surface protein gp120. (Microbial infection) Interacts with herpes virus 1 (HHV1) envelope glycoprotein B; this interaction inhibits viral infection. ADP-ribosylation drastically reduces cytotoxic and antibacterial activities, and enhances IL8 production. Post-translationally, phosphorylation at Tyr-85 has been found in some cancer cell lines, and interferes with ADP-ribosylation.

It localises to the secreted. Effector molecule of the innate immune system that acts via antibiotic-like properties against a broad array of infectious agents including bacteria, fungi, and viruses or by promoting the activation and maturation of some APCs. Interacts with the essential precursor of cell wall synthesis lipid II to inhibit bacterial cell wall synthesis. Inhibits adenovirus infection via inhibition of viral disassembly at the vertex region, thereby restricting the release of internal capsid protein pVI, which is required for endosomal membrane penetration during cell entry. In addition, interaction with adenovirus capsid leads to the redirection of viral particles to TLR4 thereby promoting a NLRP3-mediated inflammasome response and interleukin 1-beta (IL-1beta) release. Induces the production of proinflammatory cytokines including type I interferon (IFN) in plasmacytoid dendritic cells (pDCs) by triggering the degradation of NFKBIA and nuclear translocation of IRF1, both of which are required for activation of pDCs. This chain is Neutrophil defensin 1 (DEFA1), found in Homo sapiens (Human).